Reading from the N-terminus, the 126-residue chain is C-type natriuretic peptide 2 (126 aa).

Positions 1 to 22 (MAVCSSSSLILLTVFLSVAVET) are cleaved as a signal peptide. The propeptide occupies 23 to 102 (RPSSDRDEEQ…REKTRRWGRK (80 aa)). A disordered region spans residues 44-80 (SLILAPPTSNDSTEGSSGSPEPPTPSEAPVLIHGDRG). An intrachain disulfide couples Cys110 to Cys126.

Belongs to the natriuretic peptide family. Brain and spinal cord.

It localises to the secreted. Its function is as follows. Exhibits natriuretic and vasodepressant activity. Has cGMP-stimulating activity. May help to regulate body fluid homeostasis in a variety of aquatic environments. In Oryzias latipes (Japanese rice fish), this protein is C-type natriuretic peptide 2.